The chain runs to 464 residues: Glutamate--tRNA ligase (464 aa).

Positions 11–21 match the 'HIGH' region motif; it reads PSPTGFIHLGN. Positions 243–247 match the 'KMSKS' region motif; the sequence is KMSKR. Residue Lys246 participates in ATP binding.

This sequence belongs to the class-I aminoacyl-tRNA synthetase family. Glutamate--tRNA ligase type 1 subfamily. As to quaternary structure, monomer.

Its subcellular location is the cytoplasm. The enzyme catalyses tRNA(Glu) + L-glutamate + ATP = L-glutamyl-tRNA(Glu) + AMP + diphosphate. Catalyzes the attachment of glutamate to tRNA(Glu) in a two-step reaction: glutamate is first activated by ATP to form Glu-AMP and then transferred to the acceptor end of tRNA(Glu). This chain is Glutamate--tRNA ligase, found in Polaromonas naphthalenivorans (strain CJ2).